The primary structure comprises 281 residues: ATP synthase gamma chain (281 aa).

It belongs to the ATPase gamma chain family. In terms of assembly, F-type ATPases have 2 components, CF(1) - the catalytic core - and CF(0) - the membrane proton channel. CF(1) has five subunits: alpha(3), beta(3), gamma(1), delta(1), epsilon(1). CF(0) has three main subunits: a, b and c.

It is found in the cell membrane. In terms of biological role, produces ATP from ADP in the presence of a proton gradient across the membrane. The gamma chain is believed to be important in regulating ATPase activity and the flow of protons through the CF(0) complex. This is ATP synthase gamma chain from Mesoplasma florum (strain ATCC 33453 / NBRC 100688 / NCTC 11704 / L1) (Acholeplasma florum).